Reading from the N-terminus, the 943-residue chain is U3 small nucleolar RNA-associated protein 12 (943 aa).

WD repeat units lie at residues 77 to 107 (AKPA…KVWD), 119 to 149 (GHKA…IVWD), 161 to 190 (SHKD…KLWD), 202 to 230 (AHTG…KIWK), 389 to 418 (GQRT…KIWN), 428 to 458 (FECG…QLFD), 471 to 501 (AHDA…KFWD), 571 to 601 (GHKL…KIWG), 613 to 643 (AHQD…KYWD), and 655 to 685 (AHQS…RIWE). The interval 715–739 (EGNGDDAFKADASGEGVEDEASGVH) is disordered.

It belongs to the WD repeat WDR3/UTP12 family. In terms of assembly, interacts with snoRNA U3. Interacts with MPP10. Component of the ribosomal small subunit (SSU) processome composed of at least 40 protein subunits and snoRNA U3.

The protein localises to the nucleus. It localises to the nucleolus. Involved in nucleolar processing of pre-18S ribosomal RNA. This chain is U3 small nucleolar RNA-associated protein 12 (DIP2), found in Saccharomyces cerevisiae (strain ATCC 204508 / S288c) (Baker's yeast).